The primary structure comprises 156 residues: Small ribosomal subunit protein uS7 (156 aa).

It belongs to the universal ribosomal protein uS7 family. Part of the 30S ribosomal subunit. Contacts proteins S9 and S11.

Functionally, one of the primary rRNA binding proteins, it binds directly to 16S rRNA where it nucleates assembly of the head domain of the 30S subunit. Is located at the subunit interface close to the decoding center, probably blocks exit of the E-site tRNA. This chain is Small ribosomal subunit protein uS7, found in Lactobacillus delbrueckii subsp. bulgaricus (strain ATCC 11842 / DSM 20081 / BCRC 10696 / JCM 1002 / NBRC 13953 / NCIMB 11778 / NCTC 12712 / WDCM 00102 / Lb 14).